Here is a 423-residue protein sequence, read N- to C-terminus: F-box/LRR-repeat protein 2 (423 aa).

Residues 9–55 (GLINKKLPKELLLRIFSFLDIVTLCRCAQISKAWNILALDGSNWQRI) enclose the F-box domain. LRR repeat units follow at residues 61–87 (QTDVEGRVVENISKRCGGFLRKLSLRG), 88–113 (CIGVGDSSLKTFAQNCRNIEHLNLNG), 114–139 (CTKITDSTCYSLSRFCSKLKHLDLTS), 140–165 (CVSITNSSLKGISEGCRNLEYLNLSW), 166–191 (CDQITKDGIEALVRGCRGLKALLLRG), 192–217 (CTQLEDEALKHIQNYCHELVSLNLQS), 218–243 (CSRITDEGVVQICRGCHRLQALCLSG), 244–269 (CSNLTDASLTALGLNCPRLQILEAAR), 270–295 (CSHLTDAGFTLLARNCHELEKMDLEE), 296–321 (CILITDSTLIQLSIHCPKLQALSLSH), 322–350 (CELITDDGILHLSNSTCGHERLRVLELDN), 351–375 (CLLITDVALEHLENCRGLERLELYD), and 376–401 (CQQVTRAGIKRMRAQLPHVKVHAYFA). The segment at 80 to 90 (LRKLSLRGCIG) is interaction with Calmodulin. A Glycyl lysine isopeptide (Lys-Gly) (interchain with G-Cter in ubiquitin) cross-link involves residue Lys-201. A Phosphothreonine modification is found at Thr-404. Residue Cys-420 is the site of S-geranylgeranyl cysteine attachment. A CAAX motif motif is present at residues 420 to 423 (CVIL).

Part of the SCF (SKP1-CUL1-F-box) E3 ubiquitin-protein ligase complex SCF(FBXL2) composed of CUL1, SKP1, RBX1 and FBXL2. Interacts with calmodulin; may antagonize substrate ubiquitination by SCF(FBXL2). May interact with PIK3R1. Interacts with PTPN13. As to quaternary structure, (Microbial infection) Interacts with hepatitis C virus non-structural protein 5A (NS5A) and less efficiently, with hepatitis C virus non-structural protein 5B (NS5B); a reaction crucial for hepatitis C virus RNA replication. Phosphorylated by GSK-beta (GSK3B), promoting recognition by FBXO3, leading to its ubiquitination by the SCF(FBXO3) complex. Post-translationally, ubiquitinated at Lys-201 by the SCF(FBXO3) complex in response to lipopolysaccharide (LPS), leading to its degradation by the proteasome. Expressed in brain, heart, kidney, liver, lung, pancreas and placenta.

The protein localises to the membrane. It functions in the pathway protein modification; protein ubiquitination. In terms of biological role, calcium-activated substrate recognition component of the SCF (SKP1-cullin-F-box protein) E3 ubiquitin-protein ligase complex, SCF(FBXL2), which mediates the ubiquitination and subsequent proteasomal degradation of target proteins. Unlike many F-box proteins, FBXL2 does not seem to target phosphodegron within its substrates but rather calmodulin-binding motifs and is thereby antagonized by calmodulin. This is the case for the cyclins CCND2 and CCND3 which polyubiquitination and subsequent degradation are inhibited by calmodulin. Through CCND2 and CCND3 degradation induces cell-cycle arrest in G(0). SCF(FBXL2) also mediates PIK3R2 ubiquitination and proteasomal degradation thereby regulating phosphatidylinositol 3-kinase signaling and autophagy. PCYT1A monoubiquitination by SCF(FBXL2) and subsequent degradation regulates synthesis of phosphatidylcholine, which is utilized for formation of membranes and of pulmonary surfactant. The SCF(FBXL2) complex acts as a regulator of inflammation by mediating ubiquitination and degradation of TRAF proteins (TRAF1, TRAF2, TRAF3, TRAF4, TRAF5 and TRAF6). The SCF(FBXL2) complex acts as a negative regulator of the NLRP3 inflammasome by mediating ubiquitination and degradation of NLRP3. In Homo sapiens (Human), this protein is F-box/LRR-repeat protein 2.